The chain runs to 337 residues: Vegetative-specific protein H5 (337 aa).

Residues 88–90 (HGG) carry the Involved in the stabilization of the negatively charged intermediate by the formation of the oxyanion hole motif. Residues serine 161, aspartate 261, and histidine 291 contribute to the active site.

It belongs to the 'GDXG' lipolytic enzyme family.

In Dictyostelium discoideum (Social amoeba), this protein is Vegetative-specific protein H5 (cinB).